Here is a 235-residue protein sequence, read N- to C-terminus: N-alpha-acetyltransferase 10 (235 aa).

N-acetylmethionine is present on Met1. An interaction with NAA15 region spans residues 1–58 (MNIRNARPEDLMNMQHCNLLCLPENYQMKYYFYHGLSWPQLSYIAEDENGKIVGYVLA). Residues 1–152 (MNIRNARPED…DAYAMKRDLT (152 aa)) form the N-acetyltransferase domain. Lys136 carries the post-translational modification N6-acetyllysine; by autocatalysis. Positions 196–213 (EEKGLAAEDSGGDSKDLS) are enriched in basic and acidic residues. The tract at residues 196-235 (EEKGLAAEDSGGDSKDLSEVSETTESTDVKDSSEASDSAS) is disordered. At Ser205 the chain carries Phosphoserine. Position 209 is a phosphoserine; by IKKB (Ser209). Phosphoserine is present on residues Ser213 and Ser216.

It belongs to the acetyltransferase family. ARD1 subfamily. As to quaternary structure, component of the N-terminal acetyltransferase A complex (also called the NatA complex) composed of NAA10 and NAA15. Interacts with NAA15. Component of the N-terminal acetyltransferase A (NatA)/HYPK complex at least composed of NAA10, NAA15 and HYPK, which has N-terminal acetyltransferase activity. In complex with NAA15, interacts with HYPK. Component of the N-terminal acetyltransferase E (NatE) complex at least composed of NAA10, NAA15 and NAA50. Within the complex interacts with NAA15; the interaction is required for binding to NAAT50. Interacts with NAAT50. The interaction of the NatA complex with NAA50 reduces the acetylation activity of the NatA complex. Component of the N-terminal acetyltransferase E (NatE)/HYPK complex at least composed of NAA10, NAA15, NAA50 and HYPK. In complex with NAA15, interacts with HYPK; the interaction with HYPK reduces the capacity of the NatA complex to interact with NAA50. Interacts with HIF1A (via its ODD domain); the interaction increases HIF1A protein stability during normoxia, an down-regulates it when induced by hypoxia. Interacts with the ribosome. Binds to MYLK. Interacts with NAA16. Interacts (via its C-terminal domain) with TSC2, leading to its acetylation. Interacts with IKBKB. Interacts with HSPA1A and HSPA1B leading to its acetylation. Post-translationally, cleaved by caspases during apoptosis. Phosphorylation by IKBKB/IKKB at Ser-209 destabilises NAA10 and promotes its proteasome-mediated degradation. In terms of processing, autoacetylated at Lys-136 which stimulates its catalytic activity. As to expression, ubiquitous.

It localises to the cytoplasm. Its subcellular location is the nucleus. It catalyses the reaction N-terminal glycyl-[protein] + acetyl-CoA = N-terminal N(alpha)-acetylglycyl-[protein] + CoA + H(+). The catalysed reaction is N-terminal L-alanyl-[protein] + acetyl-CoA = N-terminal N(alpha)-acetyl-L-alanyl-[protein] + CoA + H(+). It carries out the reaction N-terminal L-seryl-[protein] + acetyl-CoA = N-terminal N(alpha)-acetyl-L-seryl-[protein] + CoA + H(+). The enzyme catalyses N-terminal L-valyl-[protein] + acetyl-CoA = N-terminal N(alpha)-acetyl-L-valyl-[protein] + CoA + H(+). It catalyses the reaction N-terminal L-cysteinyl-[protein] + acetyl-CoA = N-terminal N(alpha)-acetyl-L-cysteinyl-[protein] + CoA + H(+). The catalysed reaction is N-terminal L-threonyl-[protein] + acetyl-CoA = N-terminal N(alpha)-acetyl-L-threonyl-[protein] + CoA + H(+). Functionally, catalytic subunit of the N-terminal acetyltransferase A (NatA) complex which displays alpha (N-terminal) acetyltransferase activity. Acetylates amino termini that are devoid of initiator methionine. The alpha (N-terminal) acetyltransferase activity may be important for vascular, hematopoietic and neuronal growth and development. Without NAA15, displays epsilon (internal) acetyltransferase activity towards HIF1A, thereby promoting its degradation. Represses MYLK kinase activity by acetylation, and thus represses tumor cell migration. Acetylates, and stabilizes TSC2, thereby repressing mTOR activity and suppressing cancer development. Acetylates HSPA1A and HSPA1B at 'Lys-77' which enhances its chaperone activity and leads to preferential binding to co-chaperone HOPX. Acetylates HIST1H4A. Acts as a negative regulator of sister chromatid cohesion during mitosis. The polypeptide is N-alpha-acetyltransferase 10 (Naa10) (Mus musculus (Mouse)).